The chain runs to 147 residues: Sec-independent protein translocase protein TatB (147 aa).

Residues 2–22 form a helical membrane-spanning segment; sequence FDGIGFMELLLIGVLGLVVLG. Residues 68 to 147 are disordered; the sequence is ESKGLSNLSP…DTRSNPKANG (80 aa). Polar residues predominate over residues 71-97; sequence GLSNLSPELQESIDQLKQAAQSVNRPY. The segment covering 112-133 has biased composition (low complexity); the sequence is PASQSVSSEASPTASSAPTSEP.

Belongs to the TatB family. The Tat system comprises two distinct complexes: a TatABC complex, containing multiple copies of TatA, TatB and TatC subunits, and a separate TatA complex, containing only TatA subunits. Substrates initially bind to the TatABC complex, which probably triggers association of the separate TatA complex to form the active translocon.

It localises to the cell inner membrane. Its function is as follows. Part of the twin-arginine translocation (Tat) system that transports large folded proteins containing a characteristic twin-arginine motif in their signal peptide across membranes. Together with TatC, TatB is part of a receptor directly interacting with Tat signal peptides. TatB may form an oligomeric binding site that transiently accommodates folded Tat precursor proteins before their translocation. This is Sec-independent protein translocase protein TatB from Shewanella sp. (strain MR-4).